The primary structure comprises 442 residues: Meiosis-specific with OB domain-containing protein (442 aa).

A DNA-binding region (OB) is located at residues 167–272; that stretch reads IINVLAAVKS…EANILLNFIR (106 aa).

Belongs to the MEIOB family. Component of a multiprotein complex with RPA2 and SPATA22. Interacts with SPATA22. Interacts with the complex BRME1:HSF2BP:BRCA2. In fetal gonads, specifically expressed in the ovary starting at the 14th weeks post fertilization. In the adult, restricted to testis.

It localises to the cytoplasm. It is found in the nucleus. The protein resides in the chromosome. Single-stranded DNA-binding protein required for homologous recombination in meiosis I. Required for double strand breaks (DSBs) repair and crossover formation and promotion of faithful and complete synapsis. Not required for the initial loading of recombinases but required to maintain a proper number of RAD51 and DMC1 foci after the zygotene stage. May act by ensuring the stabilization of recombinases, which is required for successful homology search and meiotic recombination. Displays Single-stranded DNA 3'-5' exonuclease activity in vitro. In Homo sapiens (Human), this protein is Meiosis-specific with OB domain-containing protein.